We begin with the raw amino-acid sequence, 204 residues long: Glutathione S-transferase (204 aa).

Positions 3–80 (PSYKLTYCPV…YLGKQFGLSG (78 aa)) constitute a GST N-terminal domain. Glutathione-binding positions include Y9, W40, K44, 50 to 52 (GKT), and 64 to 65 (QS). A GST C-terminal domain is found at 82–204 (DDWENLEIDM…WVAKRPPTDL (123 aa)).

This sequence belongs to the GST superfamily. Sigma family.

The enzyme catalyses RX + glutathione = an S-substituted glutathione + a halide anion + H(+). The protein is Glutathione S-transferase of Blattella germanica (German cockroach).